Reading from the N-terminus, the 456-residue chain is IQ domain-containing protein IQM3 (456 aa).

Residues 46–75 (TRLAAVKVQKVYRSYRTRRRLADSVVVAEE) enclose the IQ domain. The disordered stretch occupies residues 315–358 (SEDSDSYDDYVKSNGGSEPEPLKKEDTTFQAETETDENGNGTVG).

Expressed in roots, rosette and cauline leaves, flowers and siliques, and at lower levels in stems.

The protein localises to the cytoplasm. Its subcellular location is the nucleus. Functionally, may be involved in biotic and abiotic stress responses. The chain is IQ domain-containing protein IQM3 from Arabidopsis thaliana (Mouse-ear cress).